Here is a 134-residue protein sequence, read N- to C-terminus: Ribonuclease P protein component 2 (134 aa).

This sequence belongs to the eukaryotic/archaeal RNase P protein component 2 family. As to quaternary structure, consists of a catalytic RNA component and at least 4-5 protein subunits. Forms a subcomplex with Rnp3 which stimulates the catalytic RNA.

It localises to the cytoplasm. It carries out the reaction Endonucleolytic cleavage of RNA, removing 5'-extranucleotides from tRNA precursor.. Functionally, part of ribonuclease P, a protein complex that generates mature tRNA molecules by cleaving their 5'-ends. The chain is Ribonuclease P protein component 2 from Methanocaldococcus jannaschii (strain ATCC 43067 / DSM 2661 / JAL-1 / JCM 10045 / NBRC 100440) (Methanococcus jannaschii).